The sequence spans 546 residues: CTP synthase (546 aa).

The tract at residues 1–266 (MARYIFITGG…DTEVLDVFGL (266 aa)) is amidoligase domain. Ser13 lines the CTP pocket. Residue Ser13 coordinates UTP. 14 to 19 (SLGKGL) is a binding site for ATP. Position 54 (Tyr54) interacts with L-glutamine. Asp71 is a binding site for ATP. Residues Asp71 and Glu140 each coordinate Mg(2+). Residues 147 to 149 (DIE), 187 to 192 (KTKPTQ), and Lys223 each bind CTP. Residues 187–192 (KTKPTQ) and Lys223 contribute to the UTP site. The Glutamine amidotransferase type-1 domain occupies 293 to 545 (NIAIVGKYTG…IGAAKERSRL (253 aa)). Ala357 provides a ligand contact to L-glutamine. The active-site Nucleophile; for glutamine hydrolysis is the Cys384. Residues 385–388 (FGMQ), Glu408, and Arg473 contribute to the L-glutamine site. Residues His518 and Glu520 contribute to the active site.

It belongs to the CTP synthase family. In terms of assembly, homotetramer.

It carries out the reaction UTP + L-glutamine + ATP + H2O = CTP + L-glutamate + ADP + phosphate + 2 H(+). The enzyme catalyses L-glutamine + H2O = L-glutamate + NH4(+). The catalysed reaction is UTP + NH4(+) + ATP = CTP + ADP + phosphate + 2 H(+). The protein operates within pyrimidine metabolism; CTP biosynthesis via de novo pathway; CTP from UDP: step 2/2. Its activity is regulated as follows. Allosterically activated by GTP, when glutamine is the substrate; GTP has no effect on the reaction when ammonia is the substrate. The allosteric effector GTP functions by stabilizing the protein conformation that binds the tetrahedral intermediate(s) formed during glutamine hydrolysis. Inhibited by the product CTP, via allosteric rather than competitive inhibition. Catalyzes the ATP-dependent amination of UTP to CTP with either L-glutamine or ammonia as the source of nitrogen. Regulates intracellular CTP levels through interactions with the four ribonucleotide triphosphates. The chain is CTP synthase from Phenylobacterium zucineum (strain HLK1).